A 379-amino-acid chain; its full sequence is Structure-specific endonuclease subunit EME2 (379 aa).

The tract at residues 1–55 (MARVGPGRAGVSCQGRGRGRGGSGQRRPPTWEISDSDAEDSAGSEAAARARDPAG) is disordered. The tract at residues 50–266 (ARDPAGERRA…YPLKQYRESQ (217 aa)) is nuclease-like domain; forms the post-nick DNA binding interface and is involved in DNA recognition and bending. The interval 288 to 379 (GLQAAWRRQI…NPDLLLDLGS (92 aa)) is helix-hairpin-helix (2HhH); forms the pre-nick DNA binding interface and is involved in DNA recognition and bending.

This sequence belongs to the EME1/MMS4 family. As to quaternary structure, part of the heterodimeric MUS81-EME2 complex; the complex forms specifically during the DNA replication phase of the cell cycle.

It localises to the nucleus. In terms of biological role, non-catalytic subunit of the structure-specific, heterodimeric DNA endonuclease MUS81-EME2 which is involved in the maintenance of genome stability. In the complex, EME2 is required for DNA cleavage, participating in DNA recognition and bending. MUS81-EME2 cleaves 3'-flaps and nicked Holliday junctions, and exhibit limited endonuclease activity with 5' flaps and nicked double-stranded DNAs. MUS81-EME2 which is active during the replication of DNA is more specifically involved in replication fork processing. Replication forks frequently encounter obstacles to their passage, including DNA base lesions, DNA interstrand cross-links, difficult-to-replicate sequences, transcription bubbles, or tightly bound proteins. One mechanism for the restart of a stalled replication fork involves nucleolytic cleavage mediated by the MUS81-EME2 endonuclease. By acting upon the stalled fork, MUS81-EME2 generates a DNA double-strand break (DSB) that can be repaired by homologous recombination, leading to the restoration of an active fork. MUS81-EME2 could also function in telomere maintenance. The polypeptide is Structure-specific endonuclease subunit EME2 (Homo sapiens (Human)).